A 238-amino-acid chain; its full sequence is Purine nucleoside phosphorylase DeoD-type (238 aa).

His4 serves as a coordination point for a purine D-ribonucleoside. Residues Gly20, Arg24, Arg43, and 87-90 (RIGS) contribute to the phosphate site. Residues 181-183 (EME) and 205-206 (SD) each bind a purine D-ribonucleoside. Asp206 (proton donor) is an active-site residue.

It belongs to the PNP/UDP phosphorylase family. In terms of assembly, homohexamer; trimer of homodimers.

It carries out the reaction a purine D-ribonucleoside + phosphate = a purine nucleobase + alpha-D-ribose 1-phosphate. The catalysed reaction is a purine 2'-deoxy-D-ribonucleoside + phosphate = a purine nucleobase + 2-deoxy-alpha-D-ribose 1-phosphate. Its function is as follows. Catalyzes the reversible phosphorolytic breakdown of the N-glycosidic bond in the beta-(deoxy)ribonucleoside molecules, with the formation of the corresponding free purine bases and pentose-1-phosphate. The polypeptide is Purine nucleoside phosphorylase DeoD-type (Mycoplasma pneumoniae (strain ATCC 29342 / M129 / Subtype 1) (Mycoplasmoides pneumoniae)).